The chain runs to 150 residues: MTTENRTPRIIEAKEIMTLLPHRFPFLLVDRVVDFQEGEWLKAIKNISVNEPCFTGHFPNEPILPGVLILEALAQSMGLLAFKTHEIQGGELFYFAGIDDARFKRPVLPGDQMELYVEVIKERRGITSFIGRATVNGEVACEAKLMCARR.

Residue His-57 is part of the active site.

The protein belongs to the thioester dehydratase family. FabZ subfamily.

The protein resides in the cytoplasm. It catalyses the reaction a (3R)-hydroxyacyl-[ACP] = a (2E)-enoyl-[ACP] + H2O. Involved in unsaturated fatty acids biosynthesis. Catalyzes the dehydration of short chain beta-hydroxyacyl-ACPs and long chain saturated and unsaturated beta-hydroxyacyl-ACPs. The chain is 3-hydroxyacyl-[acyl-carrier-protein] dehydratase FabZ from Actinobacillus succinogenes (strain ATCC 55618 / DSM 22257 / CCUG 43843 / 130Z).